Here is a 59-residue protein sequence, read N- to C-terminus: UPF0181 protein YoaH (59 aa).

This sequence belongs to the UPF0181 family.

The polypeptide is UPF0181 protein YoaH (Salmonella arizonae (strain ATCC BAA-731 / CDC346-86 / RSK2980)).